Reading from the N-terminus, the 440-residue chain is Probable secretory pathway GDP dissociation inhibitor 1 (440 aa).

Belongs to the Rab GDI family.

The sequence is that of Probable secretory pathway GDP dissociation inhibitor 1 (gdi1) from Schizosaccharomyces pombe (strain 972 / ATCC 24843) (Fission yeast).